A 536-amino-acid polypeptide reads, in one-letter code: GPI alpha-1,2-mannosyltransferase 3 (536 aa).

An N-linked (GlcNAc...) asparagine glycan is attached at N15. Helical transmembrane passes span 40–60 (IFGINITVFIVLVRLLNCVLV) and 118–138 (VYLLVFVPRVFQALLAAYADV). The N-linked (GlcNAc...) asparagine glycan is linked to N176. 6 consecutive transmembrane segments (helical) span residues 206 to 226 (LVSLAVVIRPTALIVWFPLIF), 243 to 263 (YFPIGVLALGVSTLIDSFFYG), 297 to 317 (GLPVVIGPHLPLVLHGCLLST), 322 to 342 (ILLLTIIWTTAVYSLLAHKEF), 344 to 364 (FIYPVLPFCMIFCGLSLAKLQ), and 369 to 389 (AAAGALLLFNLCPALYTGLVH). N467 carries an N-linked (GlcNAc...) asparagine glycan.

Belongs to the glycosyltransferase 22 family. PIGB subfamily.

It is found in the endoplasmic reticulum membrane. Its pathway is glycolipid biosynthesis; glycosylphosphatidylinositol-anchor biosynthesis. Alpha-1,2-mannosyltransferase that catalyzes the transfer of the third mannose, via an alpha-1,2 bond, from a dolichol-phosphate-mannose (Dol-P-Man) to an alpha-D-Man-(1-&gt;6)-2-PEtn-alpha-D-Man-(1-&gt;4)-alpha-D-GlcN-(1-&gt;6)-(1-radyl,2-acyl-sn-glycero-3-phospho)-2-acyl-inositol intermediate to generate an alpha-D-Man-(1-&gt;2)-alpha-D-Man-(1-&gt;6)-2-PEtn-alpha-D-Man-(1-&gt;4)-alpha-D-GlcN-(1-&gt;6)-(1-radyl,2-acyl-sn-glycero-3-phospho)-2-acyl-inositol (also termed H6) and participates in the nineth step of the glycosylphosphatidylinositol-anchor biosynthesis. May also add the third mannose to an alpha-D-Man-(1-&gt;6)-alpha-D-Man-(1-&gt;4)-alpha-D-GlcN-(1-&gt;6)-(1-radyl,2-acyl-sn-glycero-3-phospho)-2-acyl-inositol (also termed H3) intermediate generating an alpha-D-Man-(1-&gt;2)-alpha-D-Man-(1-&gt;6)-alpha-D-Man-(1-&gt;4)-alpha-D-GlcN-(1-&gt;6)-(1-radyl,2-acyl-sn-glycero-3-phospho)-2-acyl-inositol (also termed H4). This Danio rerio (Zebrafish) protein is GPI alpha-1,2-mannosyltransferase 3.